A 30-amino-acid chain; its full sequence is Cyclotide hyen-C (30 aa).

Positions 1–30 (GTHPCQETCVTSTRCSTQGCHCNWPICFKN) form a cross-link, cyclopeptide (Gly-Asn). 3 cysteine pairs are disulfide-bonded: C5/C20, C9/C22, and C15/C27.

This is a cyclic peptide. As to expression, detected in stems (at protein level).

Its function is as follows. Probably participates in a plant defense mechanism. Does not display any cytotoxic activity towards K562, HeLa, MCF-7, HUVEC or red blood cells. Does not bind to phospholipd membranes containing 1-palmitoyl 2-oleoyl phosphatidylcholine (POPC) or 1-palmitoyl-2-oleophosphatidylethanolamine (POPE). The protein is Cyclotide hyen-C of Pigea enneasperma (Spade flower).